The sequence spans 573 residues: MLFNDFCKILDKIEKTTKRLEKTDYFVELIDFIKTNGKPENLKQVSQITIGRVFAEFENKEIGIGPNLLLEAVKTTGISEKDLKAEIKKTGDIGTAVENLSSNIKQVSLFSQPLTLEEMYSTLKKLSEIEGNSSQKKKIRIISNLLILANPVESRYISRLILEDMRIGMNIPTILASFSNYFNVNKENVEKIYAVTNDIGLLGEKLISGSDIENDSELHLKVFRPIKPMLAQLTPSIEDAIIETKIPQFETKYDGARVQVHKSNGEVKIYSRRLEDITNSVPELVEEIKKIDIDNIILEGECVAMDLSSGKPRPFQDILRRFRRKYDINKMAEKIALRIYFFDVLYYNRGLIDTPLRNRREILEKLFGTNDWDTELEKIEKEILSKKMLFSSFKLNSDDPNLAKEFFNWSLSIGHEGVMIKNPDAPYTPGSRVKTMYKVKPTLENLDVVVTRAKIGMGKRKDWYGSYEISVKDDESNLHVIGNVGSGLTEDDLERLTKIVNEIKIEDLGEEVILEPKIVLEVTYEEIQTSEKYEMGYALRFPRVVQIREDKSINDINTLDDVKKIYDIERNRK.

Glu-250 contacts ATP. Residue Lys-252 is the N6-AMP-lysine intermediate of the active site. ATP is bound by residues Arg-257, Arg-272, Glu-301, Phe-342, Arg-432, and Lys-438.

Belongs to the ATP-dependent DNA ligase family. Requires Mg(2+) as cofactor.

The enzyme catalyses ATP + (deoxyribonucleotide)n-3'-hydroxyl + 5'-phospho-(deoxyribonucleotide)m = (deoxyribonucleotide)n+m + AMP + diphosphate.. Its function is as follows. DNA ligase that seals nicks in double-stranded DNA during DNA replication, DNA recombination and DNA repair. The polypeptide is DNA ligase (Methanococcus maripaludis (strain C5 / ATCC BAA-1333)).